A 154-amino-acid polypeptide reads, in one-letter code: MNSSIEISSYRDQHFKGSRSEQEKLLKASSTLYMGNLSFYTTEEQIYELYSRCGDIRRVIMGLDKYKKTPCGFCFVEYYAREDAENCMRYINGTRLDDRIIRCDWDAGFIEGRQYGRGKTGGQVRDEYRTDYDGGRGGYGKIIAQKINPNTLER.

MRNA-binding positions include Tyr-10, Tyr-33, 102-106 (RCDWD), 113-117 (RQYGR), and 123-124 (QV). In terms of domain architecture, RRM spans 30–108 (STLYMGNLSF…RIIRCDWDAG (79 aa)).

This sequence belongs to the RRM NCBP2 family. As to quaternary structure, component of the nuclear cap-binding complex (CBC), a heterodimer composed of Cbp80 and Cbp20 that interacts with m7GpppG-capped RNA.

The protein resides in the nucleus. Component of the cap-binding complex (CBC), which binds co-transcriptionally to the 5' cap of pre-mRNAs and is involved in various processes such as pre-mRNA splicing and RNA-mediated gene silencing (RNAi). The CBC complex is involved in miRNA-mediated RNA interference and is required for primary microRNAs (miRNAs) processing. Also involved in innate immunity via the short interfering RNAs (siRNAs) processing machinery by restricting the viral RNA production. In the CBC complex, Cbp20 recognizes and binds capped RNAs (m7GpppG-capped RNA) but requires Cbp80 to stabilize the movement of its N-terminal loop and lock the CBC into a high affinity cap-binding state with the cap structure. The chain is Nuclear cap-binding protein subunit 2 from Bombyx mori (Silk moth).